The chain runs to 57 residues: DNA-directed RNA polymerase subunit Rpo6 (57 aa).

The protein belongs to the archaeal Rpo6/eukaryotic RPB6 RNA polymerase subunit family. Part of the RNA polymerase complex.

It localises to the cytoplasm. It catalyses the reaction RNA(n) + a ribonucleoside 5'-triphosphate = RNA(n+1) + diphosphate. Functionally, DNA-dependent RNA polymerase (RNAP) catalyzes the transcription of DNA into RNA using the four ribonucleoside triphosphates as substrates. The protein is DNA-directed RNA polymerase subunit Rpo6 of Pyrococcus abyssi (strain GE5 / Orsay).